A 423-amino-acid chain; its full sequence is MGNTVAMILAGGQGTRLGVLTERIAKPAVPFGGKYRLIDFTLSNCVNSGIYRVGVLTQYRPHVLSKHIGIGRPWDLDRKDGGVEILPPYVGRHESDWYKGTANAVYQNLEFLEENDAELVLILSGDHVYAMNYNDLIDYHLLKEADGTIACMEVPIEEASRFGIMITDVDGRIVDFEEKPAKPRSNLASLGIYVFNYEFLKKVLIEDENDPNSSHDFGKDVIPRILRENLGSLYAFRFDGYWRDVGTLRSYWEANLELVLPVPPFNLYDPNWRFFTHTEEMPPAYVAPGSKVSTSLVSEGAEVYGNVFNSVIFQGVKIGRGTVVKNSVIMTRTEIGENCYLENVIIAENVKIGSNVRMGVGEDAESKLDPKVYSGLLTVVGMNSVIPDDMVIGKNCVIGIGVRPEDFKSKTLESGDYVIVREE.

Residues tyrosine 98, glycine 163, 178-179 (EK), and serine 189 each bind alpha-D-glucose 1-phosphate.

The protein belongs to the bacterial/plant glucose-1-phosphate adenylyltransferase family. Homotetramer.

The catalysed reaction is alpha-D-glucose 1-phosphate + ATP + H(+) = ADP-alpha-D-glucose + diphosphate. The protein operates within glycan biosynthesis; glycogen biosynthesis. Functionally, involved in the biosynthesis of ADP-glucose, a building block required for the elongation reactions to produce glycogen. Catalyzes the reaction between ATP and alpha-D-glucose 1-phosphate (G1P) to produce pyrophosphate and ADP-Glc. The sequence is that of Glucose-1-phosphate adenylyltransferase from Thermotoga maritima (strain ATCC 43589 / DSM 3109 / JCM 10099 / NBRC 100826 / MSB8).